A 487-amino-acid chain; its full sequence is UL37 immediate early glycoprotein (487 aa).

An N-terminal signal peptide occupies residues 1 to 22; the sequence is MSPVYVNLLGSVGLLAFWYFSY. The segment covering 83 to 107 has biased composition (acidic residues); that stretch reads GEESVTEDTEREDTEEEREDEEEEN. The disordered stretch occupies residues 83 to 121; the sequence is GEESVTEDTEREDTEEEREDEEEENEARTPEVNPIDAEG. 17 N-linked (GlcNAc...) asparagine; by host glycosylation sites follow: N206, N210, N219, N223, N242, N246, N275, N281, N294, N297, N306, N333, N337, N343, N379, N384, and N391. The helical transmembrane segment at 433–459 threads the bilayer; the sequence is WALLSICTVAAGSIALLSLFCILLIGL.

The protein belongs to the immediate early glycoprotein family. Interacts with host BAX. Interacts with host RSAD2/viperin; this interaction results in RSAD2/viperin relocalization from the endoplasmic reticulum to the mitochondria, actin cytoskeleton disruption and enhancement of infection. Interacts with host PEX19; this interaction inhibits the peroxisomal-dependent antiviral signaling. Interacts with host CHCHD6; this interaction rewires mitochondria by engaging the conserved MICOS complex.

It is found in the host endoplasmic reticulum membrane. Its subcellular location is the host Golgi apparatus membrane. It localises to the host mitochondrion membrane. The protein resides in the host peroxisome. Multifunctional transmembrane protein that plays several key roles in viral replication. Rapidely traffics from the host endoplasmic reticulum to the outer mitochondrial membrane where it acts to inhibit host immune response, block apoptotic signaling, regulate calcium flux, and induce mitochondrial fragmentation. Sequesters proapoptotic BAX at the outer mitochondrial membrane and prevents cytochrome c release and subsequent initiation of the proapoptotic cascade. Also provoques a calcium efflux from host endoplasmic reticulum and F-actin cytoskeleton disruption. Participates in the increase of host mitochondrial biogenesis, thus promoting viral replication by efficient use of newly made mitochondria. Additionally, a subset of vMIA localizes to peroxisomes, causing fragmentation and blocking peroxisomal MAVS signaling. Mechanistically, inhibits host MAVS oligomerization at peroxisomes in a mitochondrial fission factors (MFF)-dependent manner and in mitochondria independently of mitochondrial fission factors. Plays an essential role in the trafficking of host viperin/RSAD2 from the endoplasmic reticulum to the viral assembly compartment via the mitochondria during viral infection as failure of viperin to localize to the mitochondria results in insufficient lipogenesis and thus reduces viral replication. In terms of biological role, may play a role in escape from the host antiviral response. This Human cytomegalovirus (strain AD169) (HHV-5) protein is UL37 immediate early glycoprotein (UL37).